A 960-amino-acid chain; its full sequence is Lon protease homolog, mitochondrial (960 aa).

The transit peptide at 1–56 (MYRAGALVLRSATLRRTRFLAAHQNFATISSQRSSVLLAKSLESSIGGAGNQKKFY) directs the protein to the mitochondrion. The 261-residue stretch at 92 to 352 (VPILAINRYP…IALLLIQKEK (261 aa)) folds into the Lon N-terminal domain. Residues 195 to 250 (PKTDTPLNGRRARGKRAGLPPTPPPTPPLSTPTSAPEASATSPEEKEEKKDPERKG) are disordered. Over residues 214-224 (PPTPPPTPPLS) the composition is skewed to pro residues. Over residues 225 to 236 (TPTSAPEASATS) the composition is skewed to low complexity. The segment covering 237 to 250 (PEEKEEKKDPERKG) has biased composition (basic and acidic residues). 505–512 (GPPGVGKT) serves as a coordination point for ATP. Residues 712 to 748 (EQQPEDEQPAATTAISENSDAEPVSTPSDPPTFTPEK) are disordered. The Lon proteolytic domain occupies 773–960 (VTPPGVIMGL…YDELYEHLFQ (188 aa)). Catalysis depends on residues Ser-867 and Lys-910.

This sequence belongs to the peptidase S16 family. As to quaternary structure, homohexamer or homoheptamer. Organized in a ring with a central cavity.

Its subcellular location is the mitochondrion matrix. The enzyme catalyses Hydrolysis of proteins in presence of ATP.. Its function is as follows. ATP-dependent serine protease that mediates the selective degradation of misfolded, unassembled or oxidatively damaged polypeptides as well as certain short-lived regulatory proteins in the mitochondrial matrix. May also have a chaperone function in the assembly of inner membrane protein complexes. Participates in the regulation of mitochondrial gene expression and in the maintenance of the integrity of the mitochondrial genome. Binds to mitochondrial DNA in a site-specific manner. The sequence is that of Lon protease homolog, mitochondrial from Caenorhabditis briggsae.